Here is a 214-residue protein sequence, read N- to C-terminus: Ribonuclease HII (214 aa).

Positions 26 to 214 (EIVCGVDEAG…PVREAFDLIR (189 aa)) constitute an RNase H type-2 domain. The a divalent metal cation site is built by aspartate 32, glutamate 33, and aspartate 124.

The protein belongs to the RNase HII family. Mn(2+) is required as a cofactor. Mg(2+) serves as cofactor.

It localises to the cytoplasm. It catalyses the reaction Endonucleolytic cleavage to 5'-phosphomonoester.. Functionally, endonuclease that specifically degrades the RNA of RNA-DNA hybrids. The chain is Ribonuclease HII from Burkholderia pseudomallei (strain 1710b).